The chain runs to 316 residues: Pantothenate kinase (316 aa).

95–102 (GSVAVGKS) provides a ligand contact to ATP.

This sequence belongs to the prokaryotic pantothenate kinase family.

It is found in the cytoplasm. It catalyses the reaction (R)-pantothenate + ATP = (R)-4'-phosphopantothenate + ADP + H(+). Its pathway is cofactor biosynthesis; coenzyme A biosynthesis; CoA from (R)-pantothenate: step 1/5. The protein is Pantothenate kinase of Shewanella baltica (strain OS223).